The primary structure comprises 67 residues: Protein AaeX (67 aa).

Transmembrane regions (helical) follow at residues 3–23 and 43–63; these read LFPVIVVFGLSFPPIFFELLL and FVWHPALFNTALYCCLFYLIS.

Belongs to the AaeX family.

The protein resides in the cell membrane. The polypeptide is Protein AaeX (Escherichia coli (strain K12 / DH10B)).